The chain runs to 458 residues: Homogentisate 1,2-dioxygenase (458 aa).

Residue His308 is the Proton acceptor of the active site. Residues His351 and Glu357 each coordinate Fe cation. Residues Tyr366 and His387 each contribute to the homogentisate site. Position 387 (His387) interacts with Fe cation.

The protein belongs to the homogentisate dioxygenase family. In terms of assembly, hexamer; dimer of trimers. The cofactor is Fe cation.

The enzyme catalyses homogentisate + O2 = 4-maleylacetoacetate + H(+). It participates in amino-acid degradation; L-phenylalanine degradation; acetoacetate and fumarate from L-phenylalanine: step 4/6. Functionally, involved in the catabolism of homogentisate (2,5-dihydroxyphenylacetate or 2,5-OH-PhAc), a central intermediate in the degradation of phenylalanine and tyrosine. Catalyzes the oxidative ring cleavage of the aromatic ring of homogentisate to yield maleylacetoacetate. In Xanthomonas axonopodis pv. citri (strain 306), this protein is Homogentisate 1,2-dioxygenase.